The following is a 347-amino-acid chain: Suppressor of RNA-mediated gene silencing (347 aa).

It belongs to the phytoreovirus non-structural protein 10 family.

Its function is as follows. Suppressor of RNA-mediated gene silencing, also known as post-transcriptional gene silencing (PTGS), a mechanism of plant viral defense that limits the accumulation of viral RNAs. In Catharanthus roseus (Madagascar periwinkle), this protein is Suppressor of RNA-mediated gene silencing.